Reading from the N-terminus, the 738-residue chain is AP-4 complex subunit beta-1 (738 aa).

The segment at 534–600 (CSPKSDPSLG…NASFATSGHL (67 aa)) is hinge. An ear; mediates interaction with TEPSIN region spans residues 601–738 (ISEENKEGAQ…VIGTVGDIKS (138 aa)).

Belongs to the adaptor complexes large subunit family. In terms of assembly, adaptor protein complex 4 (AP-4) is a heterotetramer composed of two large adaptins (epsilon-type subunit AP4E1 and beta-type subunit AP4B1), a medium adaptin (mu-type subunit AP4M1) and a small adaptin (sigma-type AP4S1). Interacts with TEPSIN; this interaction requires the presence of a functional AP-4 complex. Interacts with GRIA2; probably indirect it mediates the somatodendritic localization of GRIA2 in neurons.

It localises to the golgi apparatus. The protein resides in the trans-Golgi network membrane. Component of the adaptor protein complex 4 (AP-4). Adaptor protein complexes are vesicle coat components involved both in vesicle formation and cargo selection. They control the vesicular transport of proteins in different trafficking pathways. AP-4 forms a non clathrin-associated coat on vesicles departing the trans-Golgi network (TGN) and may be involved in the targeting of proteins from the trans-Golgi network (TGN) to the endosomal-lysosomal system. It is also involved in protein sorting to the basolateral membrane in epithelial cells and the proper asymmetric localization of somatodendritic proteins in neurons. AP-4 is involved in the recognition and binding of tyrosine-based sorting signals found in the cytoplasmic part of cargos, but may also recognize other types of sorting signal. The polypeptide is AP-4 complex subunit beta-1 (Mus musculus (Mouse)).